Consider the following 194-residue polypeptide: MNKQKNNRERTPQPEQDTERDEQLTNSHENDIDSAPAAEENDKVADPVEQLTAQLAALNDTHLRLMAEYDNYRKRTLKEKSELIRNGGEKVLVDLLPVIDDFERALSNLGDMSEPAAIKEGVELIYSKFMDYLQKQGVKKIETADLPFDADLCDAVAMIPAPSAEQKGKVIDCVKTGYTLNDKVIRHAHVVVGE.

Positions Met1 to Pro12 are enriched in basic and acidic residues. Positions Met1–Val44 are disordered.

The protein belongs to the GrpE family. Homodimer.

Its subcellular location is the cytoplasm. Its function is as follows. Participates actively in the response to hyperosmotic and heat shock by preventing the aggregation of stress-denatured proteins, in association with DnaK and GrpE. It is the nucleotide exchange factor for DnaK and may function as a thermosensor. Unfolded proteins bind initially to DnaJ; upon interaction with the DnaJ-bound protein, DnaK hydrolyzes its bound ATP, resulting in the formation of a stable complex. GrpE releases ADP from DnaK; ATP binding to DnaK triggers the release of the substrate protein, thus completing the reaction cycle. Several rounds of ATP-dependent interactions between DnaJ, DnaK and GrpE are required for fully efficient folding. The chain is Protein GrpE from Porphyromonas gingivalis (strain ATCC BAA-308 / W83).